We begin with the raw amino-acid sequence, 433 residues long: Divergent protein kinase domain 2B (433 aa).

A signal peptide spans 1–31 (MEPQLGPEAAALRPGWLALLLWVSALSCSFS). The N-linked (GlcNAc...) asparagine glycan is linked to Asn-100.

This sequence belongs to the DIPK family.

Its subcellular location is the secreted. The polypeptide is Divergent protein kinase domain 2B (Homo sapiens (Human)).